A 534-amino-acid polypeptide reads, in one-letter code: Calcium uptake protein 1 homolog, mitochondrial (534 aa).

The N-terminal 32 residues, 1–32, are a transit peptide targeting the mitochondrion; that stretch reads MLHCSFLRVIPIKNASKRLIIVRSLTSAPAKT. The interval 131–150 is disordered; it reads PEASQKEEVTESNGEVEEVK. 3 consecutive EF-hand domains span residues 271 to 306, 338 to 359, and 466 to 501; these read TSHADFALAFKIFDVDGNGALDKEEFTKVQQLIMSQ, KDGKGSLSSEKFIEFQERLQHD, and LSDHVVDVVITLFDDNLDGKLSHEEMVAVMRRRMRR. The Ca(2+) site is built by Asp-284, Asp-286, Asn-288, and Glu-295.

The protein belongs to the MICU1 family. MICU1 subfamily. As to expression, expressed at low levels in PLM touch receptor neurons, germ cells, epidermis, and muscles.

It is found in the mitochondrion intermembrane space. It localises to the mitochondrion inner membrane. In terms of biological role, calcium sensor of the mitochondrial calcium uniporter (mcu-1) channel, which senses calcium level via its EF-hand domains. At low calcium levels, micu-1 occludes the pore of the mcu-1 channel, preventing mitochondrial calcium uptake. At higher calcium levels, calcium-binding to micu-1 induces a conformational change that weakens mcu-1-micu-1 interactions and moves micu-1 away from the pore, allowing calcium permeation through the mcu-1 channel. Also required to protect against manganese toxicity by preventing manganese uptake by mcu-1. Modulates the activity of the mitochondrial calcium uniporter protein mcu-1 depending on the level of intracellular calcium in PLM touch receptor neurons following axonal injury. The chain is Calcium uptake protein 1 homolog, mitochondrial from Caenorhabditis elegans.